Consider the following 669-residue polypeptide: MGSDPSAPGRPGWTGSLLGDREEAARPRLLPLLLVLLGCLGLGVAAEDAEVHAENWLRLYGYLPQPSRHMSTMRSAQILASALAEMQRFYGIPVTGVLDEETKEWMKRPRCGVPDQFGVRVKANLRRRRKRYALTGRKWNNHHLTFSIQNYTEKLGWYHSMEAVRRAFRVWEQATPLVFQEVPYEDIRLRRQKEADIMVLFASGFHGDSSPFDGTGGFLAHAYFPGPGLGGDTHFDADEPWTFSSTDLHGNNLFLVAVHELGHALGLEHSSNPNAIMAPFYQWKDVDNFKLPEDDLRGIQQLYGTPDGQPQPTQPLPTVTPRRPGRPDHRPPRPPQPPPPGGKPERPPKPGPPVQPRATERPDQYGPNICDGDFDTVAMLRGEMFVFKGRWFWRVRHNRVLDNYPMPIGHFWRGLPGDISAAYERQDGRFVFFKGDRYWLFREANLEPGYPQPLTSYGLGIPYDRIDTAIWWEPTGHTFFFQEDRYWRFNEETQRGDPGYPKPISVWQGIPASPKGAFLSNDAAYTYFYKGTKYWKFDNERLRMEPGYPKSILRDFMGCQEHVEPGPRWPDVARPPFNPHGGAEPGADSAEGDVGDGDGDFGAGVNKDGGSRVVVQMEEVARTVNVVMVLVPLLLLLCVLGLTYALVQMQRKGAPRVLLYCKRSLQEWV.

A signal peptide (or 45) is located at residues methionine 1–glycine 41. Positions leucine 42–arginine 131 are excised as a propeptide. The Cysteine switch signature appears at proline 109 to glutamine 116. Cysteine 111 is a binding site for Zn(2+). Residues tyrosine 132–asparagine 625 are Extracellular-facing. A glycan (N-linked (GlcNAc...) asparagine) is linked at asparagine 150. Histidine 259 is a Zn(2+) binding site. Glutamate 260 is a catalytic residue. Zn(2+)-binding residues include histidine 263 and histidine 269. Residues glutamine 300–cysteine 370 are disordered. A compositionally biased stretch (low complexity) spans threonine 305 to arginine 322. Pro residues predominate over residues arginine 333–glycine 342. Hemopexin repeat units lie at residues proline 367–leucine 415, proline 416–isoleucine 461, tyrosine 463–proline 511, and alanine 512–cysteine 559. Cysteine 370 and cysteine 559 form a disulfide bridge. The tract at residues arginine 574–aspartate 593 is disordered. At serine 589 the chain carries Phosphoserine. A helical membrane pass occupies residues valine 626–leucine 646. Over valine 647–valine 669 the chain is Cytoplasmic.

It belongs to the peptidase M10A family. Zn(2+) serves as cofactor. It depends on Ca(2+) as a cofactor. In terms of processing, the precursor is cleaved by a furin endopeptidase. As to expression, appeared to be synthesized preferentially in liver, placenta, testis, colon and intestine. Substantial amounts are also detected in pancreas, kidney, lung, heart and skeletal muscle.

It localises to the membrane. Its function is as follows. Endopeptidase that degrades various components of the extracellular matrix. May activate progelatinase A. This chain is Matrix metalloproteinase-15 (MMP15), found in Homo sapiens (Human).